Reading from the N-terminus, the 174-residue chain is Shikimate kinase 2 (174 aa).

12 to 17 (GAGKTT) contacts ATP. Residues Thr16 and Asp32 each contribute to the Mg(2+) site. Substrate is bound by residues Asp34, Arg58, and Gly79. Positions 112 to 126 (AEDPEDAQRPSLTGK) are LID domain. Arg120 is a binding site for ATP. Arg139 contributes to the substrate binding site. Gln155 contacts ATP.

It belongs to the shikimate kinase family. AroL subfamily. As to quaternary structure, monomer. Requires Mg(2+) as cofactor.

It is found in the cytoplasm. The catalysed reaction is shikimate + ATP = 3-phosphoshikimate + ADP + H(+). The protein operates within metabolic intermediate biosynthesis; chorismate biosynthesis; chorismate from D-erythrose 4-phosphate and phosphoenolpyruvate: step 5/7. In terms of biological role, catalyzes the specific phosphorylation of the 3-hydroxyl group of shikimic acid using ATP as a cosubstrate. The chain is Shikimate kinase 2 from Yersinia enterocolitica serotype O:8 / biotype 1B (strain NCTC 13174 / 8081).